Reading from the N-terminus, the 600-residue chain is Proline--tRNA ligase (600 aa).

It belongs to the class-II aminoacyl-tRNA synthetase family. ProS type 1 subfamily. In terms of assembly, homodimer.

Its subcellular location is the cytoplasm. The enzyme catalyses tRNA(Pro) + L-proline + ATP = L-prolyl-tRNA(Pro) + AMP + diphosphate. In terms of biological role, catalyzes the attachment of proline to tRNA(Pro) in a two-step reaction: proline is first activated by ATP to form Pro-AMP and then transferred to the acceptor end of tRNA(Pro). As ProRS can inadvertently accommodate and process non-cognate amino acids such as alanine and cysteine, to avoid such errors it has two additional distinct editing activities against alanine. One activity is designated as 'pretransfer' editing and involves the tRNA(Pro)-independent hydrolysis of activated Ala-AMP. The other activity is designated 'posttransfer' editing and involves deacylation of mischarged Ala-tRNA(Pro). The misacylated Cys-tRNA(Pro) is not edited by ProRS. This chain is Proline--tRNA ligase, found in Prochlorococcus marinus (strain MIT 9211).